The sequence spans 408 residues: Succinylornithine transaminase (408 aa).

An N6-(pyridoxal phosphate)lysine modification is found at Lys-252.

The protein belongs to the class-III pyridoxal-phosphate-dependent aminotransferase family. AstC subfamily. It depends on pyridoxal 5'-phosphate as a cofactor.

The catalysed reaction is N(2)-succinyl-L-ornithine + 2-oxoglutarate = N-succinyl-L-glutamate 5-semialdehyde + L-glutamate. Its pathway is amino-acid degradation; L-arginine degradation via AST pathway; L-glutamate and succinate from L-arginine: step 3/5. Catalyzes the transamination of N(2)-succinylornithine and alpha-ketoglutarate into N(2)-succinylglutamate semialdehyde and glutamate. Can also act as an acetylornithine aminotransferase. This chain is Succinylornithine transaminase, found in Salmonella newport (strain SL254).